Reading from the N-terminus, the 345-residue chain is Uroporphyrinogen decarboxylase (345 aa).

Residues Arg27 to Arg31, Phe46, Asp76, Tyr152, Ser207, and His320 each bind substrate.

The protein belongs to the uroporphyrinogen decarboxylase family. As to quaternary structure, homodimer.

The protein resides in the cytoplasm. The enzyme catalyses uroporphyrinogen III + 4 H(+) = coproporphyrinogen III + 4 CO2. It participates in porphyrin-containing compound metabolism; protoporphyrin-IX biosynthesis; coproporphyrinogen-III from 5-aminolevulinate: step 4/4. Functionally, catalyzes the decarboxylation of four acetate groups of uroporphyrinogen-III to yield coproporphyrinogen-III. The protein is Uroporphyrinogen decarboxylase of Oceanobacillus iheyensis (strain DSM 14371 / CIP 107618 / JCM 11309 / KCTC 3954 / HTE831).